The sequence spans 715 residues: DNA-directed RNA polymerase subunit beta' (715 aa).

Zn(2+) is bound by residues C69, C71, C87, and C90. Residues 244-272 form a disordered region; the sequence is APESQSEVIEAQGPVPQAEEEKQRDQSIQ. Mg(2+)-binding residues include D520, D522, and D524.

The protein belongs to the RNA polymerase beta' chain family. RpoC1 subfamily. In plastids the minimal PEP RNA polymerase catalytic core is composed of four subunits: alpha, beta, beta', and beta''. When a (nuclear-encoded) sigma factor is associated with the core the holoenzyme is formed, which can initiate transcription. Requires Mg(2+) as cofactor. The cofactor is Zn(2+).

Its subcellular location is the plastid. The protein localises to the chloroplast. It catalyses the reaction RNA(n) + a ribonucleoside 5'-triphosphate = RNA(n+1) + diphosphate. DNA-dependent RNA polymerase catalyzes the transcription of DNA into RNA using the four ribonucleoside triphosphates as substrates. The chain is DNA-directed RNA polymerase subunit beta' from Zygnema circumcarinatum (Green alga).